A 431-amino-acid polypeptide reads, in one-letter code: Nocturnin (431 aa).

Residues 1–75 constitute a mitochondrion transit peptide; the sequence is MFHSPRRLCS…SMGTGTSRLY (75 aa). A compositionally biased stretch (low complexity) spans 20–31; it reads LRRLPAPGLRRP. Residues 20-41 form a disordered region; the sequence is LRRLPAPGLRRPLSPPAAVPRP. The segment covering 32-41 has biased composition (pro residues); the sequence is LSPPAAVPRP. Glu195 is a Mg(2+) binding site. Substrate is bound by residues Glu195, 219–221, Asn263, 286–289, and 324–326; these read KPW, HLKA, and DFN. An interaction with PPARG region spans residues 343–353; it reads NLNSAYKLLSA. Residue His414 participates in substrate binding.

Belongs to the CCR4/nocturin family. As to quaternary structure, interacts with PPARG. Mg(2+) is required as a cofactor. As to expression, adipose tissue. Expression is higher in subcutaneous adipose tissue as compared to visceral adipose tissue.

It is found in the cytoplasm. The protein resides in the nucleus. The protein localises to the perinuclear region. It localises to the mitochondrion. It carries out the reaction NADP(+) + H2O = phosphate + NAD(+). It catalyses the reaction NADPH + H2O = phosphate + NADH. Functionally, phosphatase which catalyzes the conversion of NADP(+) to NAD(+) and of NADPH to NADH. Shows a small preference for NADPH over NADP(+). Represses translation and promotes degradation of target mRNA molecules. Plays an important role in post-transcriptional regulation of metabolic genes under circadian control. Exerts a rhythmic post-transcriptional control of genes necessary for metabolic functions including nutrient absorption, glucose/insulin sensitivity, lipid metabolism, adipogenesis, inflammation and osteogenesis. Plays an important role in favoring adipogenesis over osteoblastogenesis and acts as a key regulator of the adipogenesis/osteogenesis balance. Promotes adipogenesis by facilitating PPARG nuclear translocation which activates its transcriptional activity. Regulates circadian expression of NOS2 in the liver and negatively regulates the circadian expression of IGF1 in the bone. Critical for proper development of early embryos. The chain is Nocturnin from Homo sapiens (Human).